We begin with the raw amino-acid sequence, 565 residues long: Potassium-transporting ATPase potassium-binding subunit (565 aa).

The next 12 membrane-spanning stretches (helical) occupy residues 6-26 (LMLLGLLILLLLILAPLLGSL), 63-83 (LLAILAFNLLGIVLLFALLMA), 132-152 (GLGVQNFLSAASGIAVLFALI), 175-195 (LYVLLPLSLLLSLLFVSQGVI), 250-270 (LSNLLQMVAIFLLPTALCFAF), 283-303 (LLWTMSLIFIVAAGCVMYAEL), 327-347 (FGILASALYAVVTTAASCGAV), 354-374 (FTALGGMVPMWLMQIGEVVFG), 379-399 (GLYGMLLFVLLTVFIAGLMIG), 418-438 (ALAILIPPALVLTGSAIALLC), 483-503 (LLLALVMLIGRFGVIIPVMAI), and 524-544 (GALFVSLLIGTILLVGALTFI).

This sequence belongs to the KdpA family. As to quaternary structure, the system is composed of three essential subunits: KdpA, KdpB and KdpC.

It is found in the cell inner membrane. Functionally, part of the high-affinity ATP-driven potassium transport (or Kdp) system, which catalyzes the hydrolysis of ATP coupled with the electrogenic transport of potassium into the cytoplasm. This subunit binds the periplasmic potassium ions and delivers the ions to the membrane domain of KdpB through an intramembrane tunnel. The protein is Potassium-transporting ATPase potassium-binding subunit of Edwardsiella ictaluri (strain 93-146).